We begin with the raw amino-acid sequence, 391 residues long: Phosphoglycerate kinase (391 aa).

Substrate is bound by residues 21 to 23, Arg-36, 59 to 62, Arg-113, and Arg-146; these read DLN and HLGR. ATP-binding positions include Lys-197, Glu-319, and 345–348; that span reads GGDT.

Belongs to the phosphoglycerate kinase family. As to quaternary structure, monomer.

The protein resides in the cytoplasm. The catalysed reaction is (2R)-3-phosphoglycerate + ATP = (2R)-3-phospho-glyceroyl phosphate + ADP. It participates in carbohydrate degradation; glycolysis; pyruvate from D-glyceraldehyde 3-phosphate: step 2/5. This chain is Phosphoglycerate kinase, found in Pseudoalteromonas atlantica (strain T6c / ATCC BAA-1087).